Here is a 1399-residue protein sequence, read N- to C-terminus: FYVE, RhoGEF and PH domain-containing protein 6 (1399 aa).

6 disordered regions span residues 1–99, 138–164, 185–210, 235–281, 299–341, and 367–479; these read MTSA…KDVR, MKEN…SEKC, LTQQ…NGDH, AHHN…DGIS, YTSK…NGSS, and PVDE…KKPQ. A compositionally biased stretch (low complexity) spans 50 to 60; the sequence is PAIAPKPKVPT. A compositionally biased stretch (basic and acidic residues) spans 259 to 276; the sequence is AESRGHTDSCEPENKRVA. The span at 307–321 shows a compositional bias: basic residues; the sequence is KPRKTHAAARLRRQK. 2 stretches are compositionally biased toward polar residues: residues 332 to 341 and 377 to 402; these read EPGNSNNGSS and RALT…QQTP. Residues 403-418 are compositionally biased toward low complexity; the sequence is SLDTDSSLTSDSSGSG. Polar residues predominate over residues 428–453; the sequence is TYTQCSTQPLSLPKQVTSACTDQPPA. Ser494, Ser531, and Ser583 each carry phosphoserine. Positions 515-542 are disordered; it reads RNYLHHPGPPNHGASASPFDMPNPTSEK. 2 disordered regions span residues 631-650 and 657-678; these read QHGD…GLES and TGEE…SLES. Phosphoserine occurs at positions 670 and 697. The disordered stretch occupies residues 768 to 840; that stretch reads APDGQLQLDP…KQDEDAGMKS (73 aa). Positions 802–817 are enriched in acidic residues; sequence PSDEEVINSSDEDDVS. The segment covering 821 to 838 has biased composition (basic and acidic residues); it reads SKGEPDPLEDKQDEDAGM. The region spanning 841 to 1030 is the DH domain; the sequence is KVHHIAKEIM…IEVANHANDT (190 aa). A PH 1 domain is found at 1059–1153; sequence VFLKEGTLMK…WLEAISSSIE (95 aa). A Phosphoserine modification is found at Ser1167. The FYVE-type zinc-finger motif lies at 1191–1250; that stretch reads DTRATMCMICTSEFTLTWRRHHCRACGKIVCQACSSNKYGLDYLKGQLARVCEHCFQELQ. Zn(2+)-binding residues include Cys1197, Cys1200, Cys1213, Cys1216, Cys1221, Cys1224, Cys1242, and Cys1245. The 97-residue stretch at 1302-1398 folds into the PH 2 domain; it reads DSTMSGYLYR…WIDAFQEGTV (97 aa).

It is found in the cytoplasm. The protein localises to the cytoskeleton. Its function is as follows. May activate CDC42, a member of the Ras-like family of Rho- and Rac proteins, by exchanging bound GDP for free GTP. May play a role in regulating the actin cytoskeleton and cell shape. The chain is FYVE, RhoGEF and PH domain-containing protein 6 (Fgd6) from Mus musculus (Mouse).